A 352-amino-acid polypeptide reads, in one-letter code: Protein-glutamate methylesterase/protein-glutamine glutaminase 2 (352 aa).

The Response regulatory domain maps to 6 to 124; it reads KVLIVEDSLV…NAGYDTMAAK (119 aa). Asp-57 carries the 4-aspartylphosphate modification. Positions 162 to 343 constitute a CheB-type methylesterase domain; it reads PGTYSMVGIV…LPLPAIAARL (182 aa). Active-site residues include Ser-173, His-200, and Asp-292.

The protein belongs to the CheB family. In terms of processing, phosphorylated by CheA. Phosphorylation of the N-terminal regulatory domain activates the methylesterase activity.

The protein resides in the cytoplasm. It carries out the reaction [protein]-L-glutamate 5-O-methyl ester + H2O = L-glutamyl-[protein] + methanol + H(+). The catalysed reaction is L-glutaminyl-[protein] + H2O = L-glutamyl-[protein] + NH4(+). Its function is as follows. Involved in chemotaxis. Part of a chemotaxis signal transduction system that modulates chemotaxis in response to various stimuli. Catalyzes the demethylation of specific methylglutamate residues introduced into the chemoreceptors (methyl-accepting chemotaxis proteins or MCP) by CheR. Also mediates the irreversible deamidation of specific glutamine residues to glutamic acid. This is Protein-glutamate methylesterase/protein-glutamine glutaminase 2 from Paramagnetospirillum magneticum (strain ATCC 700264 / AMB-1) (Magnetospirillum magneticum).